The sequence spans 586 residues: Aspartate--tRNA(Asp/Asn) ligase (586 aa).

Glu-172 contacts L-aspartate. Residues 196–199 (QLYK) form an aspartate region. Arg-218 contributes to the L-aspartate binding site. ATP contacts are provided by residues 218 to 220 (RDE) and Gln-227. Position 446 (His-446) interacts with L-aspartate. Residue Glu-480 participates in ATP binding. Arg-487 contributes to the L-aspartate binding site. 532–535 (GIDR) provides a ligand contact to ATP.

It belongs to the class-II aminoacyl-tRNA synthetase family. Type 1 subfamily. Homodimer.

The protein resides in the cytoplasm. It carries out the reaction tRNA(Asx) + L-aspartate + ATP = L-aspartyl-tRNA(Asx) + AMP + diphosphate. In terms of biological role, aspartyl-tRNA synthetase with relaxed tRNA specificity since it is able to aspartylate not only its cognate tRNA(Asp) but also tRNA(Asn). Reaction proceeds in two steps: L-aspartate is first activated by ATP to form Asp-AMP and then transferred to the acceptor end of tRNA(Asp/Asn). The protein is Aspartate--tRNA(Asp/Asn) ligase of Borreliella burgdorferi (strain ATCC 35210 / DSM 4680 / CIP 102532 / B31) (Borrelia burgdorferi).